The following is a 302-amino-acid chain: Sulfate adenylyltransferase subunit 2 (302 aa).

It belongs to the PAPS reductase family. CysD subfamily. In terms of assembly, heterodimer composed of CysD, the smaller subunit, and CysN.

It carries out the reaction sulfate + ATP + H(+) = adenosine 5'-phosphosulfate + diphosphate. It participates in sulfur metabolism; hydrogen sulfide biosynthesis; sulfite from sulfate: step 1/3. In terms of biological role, with CysN forms the ATP sulfurylase (ATPS) that catalyzes the adenylation of sulfate producing adenosine 5'-phosphosulfate (APS) and diphosphate, the first enzymatic step in sulfur assimilation pathway. APS synthesis involves the formation of a high-energy phosphoric-sulfuric acid anhydride bond driven by GTP hydrolysis by CysN coupled to ATP hydrolysis by CysD. The sequence is that of Sulfate adenylyltransferase subunit 2 from Escherichia coli O81 (strain ED1a).